The following is a 640-amino-acid chain: MKISTTQIERRFEISSSLVGLIDGSFEIGNLFVIVFVSYFGSKLHRPKLIGIGCFLMGTGSILMALPHFFMGYYRYSKETNIDPSENSTSNLPNCLINQMLSLNRTPSEIIERGCVKESGSHMWIYVFMGNMLRGIGETPIVPLGISYIDDFAKEGHSSLYLGTVNVMGMTGLVFAFMLGSLFAKMYVDIGYVDLSTIRITPKDSRWVGAWWLGFLVSGIVSIISSIPFFFLPLNPNKPQKERKVSLFLHVLKTNDKRNQIANLTNRRKYITKNVTGFFQSLKSILTNPLYVIFVIFTLLHMSSYIASLTYIIKMVEQQYGWSASKTNFLLGVLALPAVAIGMFSGGYIIKKFKLSLVGLAKLAFCSATVHLLSQVLYFFLICESKSVAGLTLTYDGNSPVRSHVDVPLSYCNSECNCDESQWEPVCGNNGITYLSPCLAGCKSSSGNKEPIVFYNCSCVEVIGLQNKNYSAHLGECPRDDACTRKSYVYFVIQVLDAFLCAVGLTSYSVLVIRIVQPELKALAIGFHSMIMRSLGGILVPIYFGALIDTTCMKWSTNSCGARGACRIYNSTYLGRAFFGLKVALIFPVLVLLTVFIFVVRKKSHGKDTKVLENERQVMDEANLEFLNDSEHFVPSAEEQ.

Residues Met-1–Ser-16 lie on the Extracellular side of the membrane. Residues Ser-17–Val-37 form a helical membrane-spanning segment. Residues Ser-38 to Leu-49 lie on the Cytoplasmic side of the membrane. The chain crosses the membrane as a helical span at residues Ile-50 to Phe-70. Topologically, residues Met-71–Met-123 are extracellular. A helical transmembrane segment spans residues Trp-124–Leu-144. Residues Gly-145–Ser-159 are Cytoplasmic-facing. Residues Leu-160–Gly-180 form a helical membrane-spanning segment. Residues Ser-181 to Trp-211 lie on the Extracellular side of the membrane. A helical transmembrane segment spans residues Trp-212 to Leu-232. Topologically, residues Pro-233 to Val-292 are cytoplasmic. Ser-246 bears the Phosphoserine mark. A helical membrane pass occupies residues Ile-293 to Ile-313. Residues Lys-314–Phe-329 are Extracellular-facing. Residues Leu-330 to Ile-350 traverse the membrane as a helical segment. The Cytoplasmic portion of the chain corresponds to Lys-351–Lys-362. Residues Leu-363–Cys-383 traverse the membrane as a helical segment. Residues Glu-384–Val-492 are Extracellular-facing. One can recognise a Kazal-like domain in the interval Asp-406–Glu-461. 3 disulfide bridges follow: Cys-412/Cys-442, Cys-418/Cys-438, and Cys-427/Cys-459. A helical transmembrane segment spans residues Ile-493–Ile-513. Topologically, residues Arg-514 to Lys-521 are cytoplasmic. The helical transmembrane segment at Ala-522 to Ile-542 threads the bilayer. At Tyr-543–Ala-577 the chain is on the extracellular side. A helical membrane pass occupies residues Phe-578–Phe-598. Residues Val-599–Gln-640 are Cytoplasmic-facing. Ser-636 carries the post-translational modification Phosphoserine.

Belongs to the organo anion transporter (TC 2.A.60) family.

The protein localises to the cell membrane. The polypeptide is Putative solute carrier organic anion transporter family member 1B7 (SLCO1B7) (Homo sapiens (Human)).